Consider the following 863-residue polypeptide: MSEKEGMSEELEDTISQFRKESRSQSVKEPGFIKETSNLINEASDYLEGKSSNQIYETHPRQITLESTSSSGSKSKRNEEQKKNLQFSETSTRTETSQSLSSLTGRIAEYQALVNFLSHETVGEVSPQVSEENQKHLGLETTCKDNFTVNLEAKGLQEFPKDILKIKYVKHLYLDKNQIKTFQGADSGDLLGLEILSLQENGLSSLPSEIQLLHNLRILNVSHNHISHIPKEISQLGNIRQLFFYNNYIENFPSDLECLGNLEILSLGKNKLRHIPDTLPSLKYLRVLNLEYNQLTIFPKALCFLPKLISLDLTGNLISSLPKEIRELKNLETLLLDHNKLTFLAVEIFQLLKIKELQLADNKLEVISHKIENFRELRILILDKNLLKNIPEKICCCAMLECLTLSDNKLTELPKNIHKLNNLRKLHVNRNNMVKITDSISHLNNICSLEFSGNIIAGIPIEIKNCQKIIKIELNYNKIMYFPLGLCALDSLYYLSVNGNYISEIPADISFSKQLLHLELSENKLLIFSEHFCSLINLKYLDLGKNQIKKIPASISNMISLHVLILCCNKFETFPRELCTLENLRVLDLSENQLQKISSDICNLKRIQKLNFSSNQFIHFPIELCQLQSLEQLNISQIKGRKLTRLPGELSNMTQLKELDISNNAIREIPRNIGELRNLVSLHAYNNQISYIPPSLLSLNDLQQLNLSGNNLTALPSAIYNLFSLKEINFDDNPLLRPPMEICKGKQLYTIARYLQRADERDEKILEKIFKIVANNITETNFEFLCQKLNLANSETDMPTKSTVSLSERAHQALVIWKTQSNKLSLTAAALRDQLIRALTMIGAYEIMDKITALNLFTRAIKF.

Disordered regions lie at residues 1–37 and 51–100; these read MSEK…KETS and SSNQ…SQSL. Residues 88-100 show a composition bias toward low complexity; sequence SETSTRTETSQSL. LRR repeat units lie at residues 143–166, 167–189, 190–213, 214–236, 238–259, 260–282, 284–305, 306–328, 329–351, 353–374, 375–397, 398–420, 422–443, 445–466, 468–489, 490–513, 515–535, 536–558, 560–581, 582–604, 606–627, 630–653, 654–676, 678–699, 700–722, and 724–745; these read CKDN…ILKI, KYVK…DSGD, LLGL…IQLL, HNLR…ISQL, NIRQ…LECL, GNLE…LPSL, YLRV…LCFL, PKLI…IREL, KNLE…IFQL, KIKE…IENF, RELR…ICCC, AMLE…IHKL, NLRK…ISHL, NICS…IKNC, KIIK…LCAL, DSLY…SFSK, LLHL…FCSL, INLK…ISNM, SLHV…LCTL, ENLR…ICNL, RIQK…LCQL, LEQL…LSNM, TQLK…IGEL, NLVS…LLSL, NDLQ…IYNL, and SLKE…ICKG. One can recognise a Death domain in the interval 767 to 855; the sequence is EKIFKIVANN…EIMDKITALN (89 aa). The LRR 27 repeat unit spans residues 856-863; it reads LFTRAIKF.

This Macaca fascicularis (Crab-eating macaque) protein is Leucine-rich repeat and death domain-containing protein 1 (LRRD1).